Consider the following 159-residue polypeptide: Bacterioferritin (159 aa).

A Ferritin-like diiron domain is found at 1 to 145 (MQGDPEVLRL…TQLELMDKLG (145 aa)). Residues E18 and E51 each contribute to the Fe cation site. M52 is a heme b binding site. Positions 54, 94, 127, and 130 each coordinate Fe cation.

This sequence belongs to the bacterioferritin family. Homooligomer of 24 subunits, arranged as 12 dimers, that are packed together to form an approximately spherical molecule with a central cavity, in which large amounts of iron can be deposited. Heme b is required as a cofactor.

The catalysed reaction is 4 Fe(2+) + O2 + 4 H(+) = 4 Fe(3+) + 2 H2O. It carries out the reaction Fe(2+)(in) = Fe(2+)(out). In terms of biological role, iron-storage protein, whose ferroxidase center binds Fe(2+), oxidizes it using dioxygen to Fe(3+), and participates in the subsequent Fe(3+) oxide mineral core formation within the central cavity of the BFR protein shell. This chain is Bacterioferritin (bfr), found in Mycolicibacterium paratuberculosis (strain ATCC BAA-968 / K-10) (Mycobacterium paratuberculosis).